Consider the following 121-residue polypeptide: Large ribosomal subunit protein uL18 (121 aa).

This sequence belongs to the universal ribosomal protein uL18 family. As to quaternary structure, part of the 50S ribosomal subunit; part of the 5S rRNA/L5/L18/L25 subcomplex. Contacts the 5S and 23S rRNAs.

Functionally, this is one of the proteins that bind and probably mediate the attachment of the 5S RNA into the large ribosomal subunit, where it forms part of the central protuberance. The protein is Large ribosomal subunit protein uL18 of Caldanaerobacter subterraneus subsp. tengcongensis (strain DSM 15242 / JCM 11007 / NBRC 100824 / MB4) (Thermoanaerobacter tengcongensis).